The sequence spans 230 residues: MKYNSVIRKAIFLRRPNRFQAYVVLDDEELLVHVPNTGRCREILKEGCTVLLRKGTTPNRKTPYDLIAAYKGEVLINIDSQIPNKVVEEALRNKKIEKLVNFNNISREKTFGNSRFDFKLQDDNENTYFLEVKGVTLEENGETRFPDAPTERGKKHILELIEIKKLGMGAGIIFLIQIDNVNKFSPNDETDPKFGEALRLAKKEGVDIFAYNCKVTEEEIELLNSVEIVL.

It belongs to the SfsA family.

In Clostridium perfringens (strain 13 / Type A), this protein is Sugar fermentation stimulation protein homolog.